Reading from the N-terminus, the 497-residue chain is Membrane-bound lytic murein transglycosylase F (497 aa).

The signal sequence occupies residues 1–29 (MFFRPDFRPRCAKWLIATGLFLMLGACVE). The tract at residues 30–267 (KPTTLERVKE…RLKDRYYGHV (238 aa)) is non-LT domain. Positions 268-497 (DVLGYVGAYT…PASSPEKPAL (230 aa)) are LT domain. The active site involves Glu314. The interval 464-497 (VADGNLHVPGVDKTQPPAPTAPVVPASSPEKPAL) is disordered. Over residues 486–497 (VVPASSPEKPAL) the composition is skewed to low complexity.

In the N-terminal section; belongs to the bacterial solute-binding protein 3 family. It in the C-terminal section; belongs to the transglycosylase Slt family.

It is found in the cell outer membrane. It catalyses the reaction Exolytic cleavage of the (1-&gt;4)-beta-glycosidic linkage between N-acetylmuramic acid (MurNAc) and N-acetylglucosamine (GlcNAc) residues in peptidoglycan, from either the reducing or the non-reducing ends of the peptidoglycan chains, with concomitant formation of a 1,6-anhydrobond in the MurNAc residue.. In terms of biological role, murein-degrading enzyme that degrades murein glycan strands and insoluble, high-molecular weight murein sacculi, with the concomitant formation of a 1,6-anhydromuramoyl product. Lytic transglycosylases (LTs) play an integral role in the metabolism of the peptidoglycan (PG) sacculus. Their lytic action creates space within the PG sacculus to allow for its expansion as well as for the insertion of various structures such as secretion systems and flagella. The chain is Membrane-bound lytic murein transglycosylase F from Pseudomonas syringae pv. tomato (strain ATCC BAA-871 / DC3000).